Consider the following 206-residue polypeptide: Thymidylate kinase (206 aa).

Residue 11 to 18 coordinates ATP; sequence GPEGAGKT.

The protein belongs to the thymidylate kinase family.

The enzyme catalyses dTMP + ATP = dTDP + ADP. Phosphorylation of dTMP to form dTDP in both de novo and salvage pathways of dTTP synthesis. In Deinococcus radiodurans (strain ATCC 13939 / DSM 20539 / JCM 16871 / CCUG 27074 / LMG 4051 / NBRC 15346 / NCIMB 9279 / VKM B-1422 / R1), this protein is Thymidylate kinase (tmk).